The following is a 325-amino-acid chain: Putative metal ion transporter ZIPCO (325 aa).

3 helical membrane passes run 5–25 (TFLALLIFVECVIVVYIPAYI), 46–66 (IASGAILALAFLHMLPEVIIL), and 74–94 (LYYIFILVLVSVTFLNITDIL). 2 N-linked (GlcNAc...) asparagine glycosylation sites follow: Asn-106 and Asn-160. 4 helical membrane passes run 179–199 (FFIVLSLFIHSFIEGLLMGSL), 239–259 (IYAWSFILSLPLGVFIAIFSF), 264–284 (FVEIIFSSIACGFFLYLSFNM), and 296–316 (HFISFSYFLGVGGMSTLMILF).

It is found in the cytoplasmic vesicle membrane. Functionally, putative transporter for the divalent zinc and iron cations. This Plasmodium falciparum (isolate 3D7) protein is Putative metal ion transporter ZIPCO.